Consider the following 356-residue polypeptide: Cobalt-precorrin-5B C(1)-methyltransferase (356 aa).

It belongs to the CbiD family.

The enzyme catalyses Co-precorrin-5B + S-adenosyl-L-methionine = Co-precorrin-6A + S-adenosyl-L-homocysteine. It participates in cofactor biosynthesis; adenosylcobalamin biosynthesis; cob(II)yrinate a,c-diamide from sirohydrochlorin (anaerobic route): step 6/10. Catalyzes the methylation of C-1 in cobalt-precorrin-5B to form cobalt-precorrin-6A. The polypeptide is Cobalt-precorrin-5B C(1)-methyltransferase (Geobacter sp. (strain M21)).